A 299-amino-acid polypeptide reads, in one-letter code: ATP phosphoribosyltransferase (299 aa).

This sequence belongs to the ATP phosphoribosyltransferase family. Long subfamily. Requires Mg(2+) as cofactor.

It localises to the cytoplasm. It catalyses the reaction 1-(5-phospho-beta-D-ribosyl)-ATP + diphosphate = 5-phospho-alpha-D-ribose 1-diphosphate + ATP. It participates in amino-acid biosynthesis; L-histidine biosynthesis; L-histidine from 5-phospho-alpha-D-ribose 1-diphosphate: step 1/9. With respect to regulation, feedback inhibited by histidine. Functionally, catalyzes the condensation of ATP and 5-phosphoribose 1-diphosphate to form N'-(5'-phosphoribosyl)-ATP (PR-ATP). Has a crucial role in the pathway because the rate of histidine biosynthesis seems to be controlled primarily by regulation of HisG enzymatic activity. The protein is ATP phosphoribosyltransferase of Campylobacter jejuni subsp. doylei (strain ATCC BAA-1458 / RM4099 / 269.97).